A 528-amino-acid polypeptide reads, in one-letter code: Protein spinster homolog 1 (528 aa).

Residues Met-1–Arg-49 form a disordered region. Position 2 is an N-acetylalanine (Ala-2). The next 12 helical transmembrane spans lie at Ile-50–Leu-70, Gly-98–Leu-118, Leu-127–Gly-147, Val-160–Val-180, Met-187–Ser-207, Trp-218–Val-238, Leu-278–Leu-298, Leu-323–Ile-343, Leu-357–Ala-377, Ile-381–Ile-401, Phe-421–Ile-441, and Met-465–Ile-485. Phosphoserine is present on Ser-518.

This sequence belongs to the major facilitator superfamily. Spinster (TC 2.A.1.49) family. In terms of assembly, interacts with BCL2 and BCL2L1.

The protein resides in the lysosome membrane. It localises to the mitochondrion inner membrane. It catalyses the reaction a 1-acyl-sn-glycero-3-phosphocholine(out) + H(+)(out) = a 1-acyl-sn-glycero-3-phosphocholine(in) + H(+)(in). The enzyme catalyses 1-hexadecanoyl-sn-glycero-3-phosphocholine(out) + H(+)(out) = 1-hexadecanoyl-sn-glycero-3-phosphocholine(in) + H(+)(in). The catalysed reaction is 1-(9Z-octadecenoyl)-sn-glycero-3-phosphocholine(out) + H(+)(out) = 1-(9Z-octadecenoyl)-sn-glycero-3-phosphocholine(in) + H(+)(in). It carries out the reaction 1-(5Z,8Z,11Z,14Z-eicosatetraenoyl)-sn-glycero-3-phosphocholine(out) + H(+)(out) = 1-(5Z,8Z,11Z,14Z-eicosatetraenoyl)-sn-glycero-3-phosphocholine(in) + H(+)(in). It catalyses the reaction 1-(4Z,7Z,10Z,13Z,16Z,19Z-docosahexaenoyl)-sn-glycero-3-phosphocholine(out) + H(+)(out) = 1-(4Z,7Z,10Z,13Z,16Z,19Z-docosahexaenoyl)-sn-glycero-3-phosphocholine(in) + H(+)(in). The enzyme catalyses a 1-acyl-sn-glycero-3-phosphoethanolamine(out) + H(+)(out) = a 1-acyl-sn-glycero-3-phosphoethanolamine(in) + H(+)(in). The catalysed reaction is 1-(9Z-octadecenoyl)-sn-glycero-3-phosphoethanolamine(out) + H(+)(out) = 1-(9Z-octadecenoyl)-sn-glycero-3-phosphoethanolamine(in) + H(+)(in). It carries out the reaction 1-acyl-sn-glycero-3-phospho-(1'-sn-glycerol)(out) + H(+)(out) = 1-acyl-sn-glycero-3-phospho-(1'-sn-glycerol)(in) + H(+)(in). It catalyses the reaction 1-(9Z-octadecenoyl)-sn-glycero-3-phospho-(1'-sn-glycerol)(out) + H(+)(out) = 1-(9Z-octadecenoyl)-sn-glycero-3-phospho-(1'-sn-glycerol)(in) + H(+)(in). The enzyme catalyses a 1-O-(1Z-alkenyl)-sn-glycero-3-phosphocholine(out) + H(+)(out) = a 1-O-(1Z-alkenyl)-sn-glycero-3-phosphocholine(in) + H(+)(in). The catalysed reaction is 1-(1Z-hexadecenyl)-sn-glycero-3-phosphocholine(out) + H(+)(out) = 1-(1Z-hexadecenyl)-sn-glycero-3-phosphocholine(in) + H(+)(in). It carries out the reaction a 1-O-(1Z-alkenyl)-sn-glycero-3-phosphoethanolamine(out) + H(+)(out) = a 1-O-(1Z-alkenyl)-sn-glycero-3-phosphoethanolamine(in) + H(+)(in). It catalyses the reaction 1-O-(1Z-hexadecenyl)-sn-glycero-3-phosphoethanolamine(out) + H(+)(out) = 1-O-(1Z-hexadecenyl)-sn-glycero-3-phosphoethanolamine(in) + H(+)(in). In terms of biological role, plays a critical role in the phospholipid salvage pathway from lysosomes to the cytosol. Mediates the rate-limiting, proton-dependent, lysosomal efflux of lysophospholipids, which can then be reacylated by acyltransferases in the endoplasmic reticulum to form phospholipids. Selective for zwitterionic headgroups such as lysophosphatidylcholine (LPC) and lysophosphatidylethanolamine (LPE), can also transport lysophosphatidylglycerol (LPG), but not other anionic lysophospholipids, sphingosine, nor sphingomyelin. Transports lysophospholipids with saturated, monounsaturated, and polyunsaturated fatty acids, such as 1-hexadecanoyl-sn-glycero-3-phosphocholine, 1-(9Z-octadecenoyl)-sn-glycero-3-phosphocholine and 1-(4Z,7Z,10Z,13Z,16Z,19Z-docosahexaenoyl)-sn-glycero-3-phosphocholine, respectively. Can also transport lysoplasmalogen (LPC with a fatty alcohol) such as 1-(1Z-hexadecenyl)-sn-glycero-3-phosphocholine. Lysosomal LPC could function as intracellular signaling messenger. Essential player in lysosomal homeostasis. Crucial for cell survival under conditions of nutrient limitation. May be involved in necrotic or autophagic cell death. The chain is Protein spinster homolog 1 (SPNS1) from Homo sapiens (Human).